We begin with the raw amino-acid sequence, 282 residues long: DegV domain-containing protein SpyM3_0586 (282 aa).

One can recognise a DegV domain in the interval 3 to 280; that stretch reads LAVITDSTAT…EGAIAFGVTP (278 aa). The hexadecanoate site is built by Thr-61 and Ser-94.

In terms of biological role, may bind long-chain fatty acids, such as palmitate, and may play a role in lipid transport or fatty acid metabolism. This is DegV domain-containing protein SpyM3_0586 from Streptococcus pyogenes serotype M3 (strain ATCC BAA-595 / MGAS315).